A 144-amino-acid polypeptide reads, in one-letter code: L-fucose mutarotase (144 aa).

His-22 (proton donor) is an active-site residue. Substrate is bound by residues Asp-30, Arg-109, and Tyr-131 to Asn-133.

The protein belongs to the RbsD / FucU family. FucU mutarotase subfamily. Homodecamer.

The protein resides in the cytoplasm. The catalysed reaction is alpha-L-fucose = beta-L-fucose. The protein operates within carbohydrate metabolism; L-fucose metabolism. Its function is as follows. Involved in the anomeric conversion of L-fucose. The chain is L-fucose mutarotase from Actinobacillus pleuropneumoniae serotype 5b (strain L20).